A 228-amino-acid chain; its full sequence is Endo-1,4-beta-xylanase A (228 aa).

An N-terminal signal peptide occupies residues 1–27 (MNLRKLRLLFVMCIGLTLILTAVPAHA). The 194-residue stretch at 29–222 (TITNNEMGNH…SSGSANVMTN (194 aa)) folds into the GH11 domain. The Nucleophile role is filled by glutamate 120. The Proton donor role is filled by glutamate 209.

Belongs to the glycosyl hydrolase 11 (cellulase G) family.

It catalyses the reaction Endohydrolysis of (1-&gt;4)-beta-D-xylosidic linkages in xylans.. It participates in glycan degradation; xylan degradation. This chain is Endo-1,4-beta-xylanase A (xynA), found in Bacillus pumilus (Bacillus mesentericus).